The sequence spans 132 residues: Large ribosomal subunit protein uL14 (132 aa).

It belongs to the universal ribosomal protein uL14 family. In terms of assembly, part of the 50S ribosomal subunit. Forms a cluster with proteins L3 and L24e, part of which may contact the 16S rRNA in 2 intersubunit bridges.

Its function is as follows. Binds to 23S rRNA. Forms part of two intersubunit bridges in the 70S ribosome. In Methanosarcina acetivorans (strain ATCC 35395 / DSM 2834 / JCM 12185 / C2A), this protein is Large ribosomal subunit protein uL14.